The sequence spans 472 residues: UDP-glycosyltransferase 708G2 (472 aa).

Catalysis depends on H23, which acts as the Proton acceptor. H23 provides a ligand contact to an anthocyanidin. D117 (charge relay) is an active-site residue. T140 serves as a coordination point for UDP-alpha-D-glucose. The UDP stretch occupies residues 283–284; the sequence is SR. UDP-alpha-D-glucose contacts are provided by V346, Q348, H363, W366, N367, S368, and E371. G386 serves as a coordination point for an anthocyanidin. The UDP-alpha-D-glucose site is built by D387 and Q388.

The protein belongs to the UDP-glycosyltransferase family. In terms of tissue distribution, expressed at low levels in leaves, flowers and immature leaves.

The enzyme catalyses a 3'-hydro-2'-hydroxy-beta-oxodihydrochalcone + UDP-alpha-D-glucose = a 3'-(beta-D-glucopyranosyl)-2'-hydroxy-beta-oxodihydrochalcone + UDP + H(+). Its function is as follows. UDP-glucose-dependent glucosyltransferase catalyzing the C-glucosylation of 2-hydroxyflavanones (2-hydroxylnaringenin and 2-hydroxypinocembrin) and phloretin. No activity with flavanones, flavones or flavonols. Exhibits C-glucosylation activity toward 2-phenyl-2',4',6'-trihydroxyacetophenone. Can use UDP-xylose as sugar donor, but catalytic efficiency is much lower toward UDP-xylose than toward UDP-glucose. This is UDP-glycosyltransferase 708G2 (UGT708G2) from Citrus unshiu (Satsuma mandarin).